A 276-amino-acid chain; its full sequence is Diaminopimelate epimerase (276 aa).

Positions 13, 46, and 66 each coordinate substrate. The Proton donor role is filled by Cys75. Residues 76 to 77, Asn159, Asn192, and 210 to 211 each bind substrate; these read GN and ER. Catalysis depends on Cys219, which acts as the Proton acceptor. 220–221 contributes to the substrate binding site; that stretch reads GT.

The protein belongs to the diaminopimelate epimerase family. Homodimer.

Its subcellular location is the cytoplasm. It catalyses the reaction (2S,6S)-2,6-diaminopimelate = meso-2,6-diaminopimelate. The protein operates within amino-acid biosynthesis; L-lysine biosynthesis via DAP pathway; DL-2,6-diaminopimelate from LL-2,6-diaminopimelate: step 1/1. In terms of biological role, catalyzes the stereoinversion of LL-2,6-diaminopimelate (L,L-DAP) to meso-diaminopimelate (meso-DAP), a precursor of L-lysine and an essential component of the bacterial peptidoglycan. The polypeptide is Diaminopimelate epimerase (Pseudomonas putida (strain GB-1)).